The chain runs to 196 residues: Neuropeptide prohormone-4 (196 aa).

An N-terminal signal peptide occupies residues Met-1–Lys-25. The LDL-receptor class A domain maps to Asp-50–Ala-90. 3 disulfides stabilise this stretch: Cys-51–Cys-65, Cys-59–Cys-78, and Cys-72–Cys-89.

In terms of tissue distribution, expressed by the venom duct.

The protein localises to the secreted. The chain is Neuropeptide prohormone-4 from Conus victoriae (Queen Victoria cone).